The primary structure comprises 31 residues: Cytochrome b6-f complex subunit 6 (31 aa).

A helical transmembrane segment spans residues 4–24; it reads ITSYFGFLLVALTITSALFIG.

This sequence belongs to the PetL family. In terms of assembly, the 4 large subunits of the cytochrome b6-f complex are cytochrome b6, subunit IV (17 kDa polypeptide, PetD), cytochrome f and the Rieske protein, while the 4 small subunits are PetG, PetL, PetM and PetN. The complex functions as a dimer.

It localises to the plastid. The protein localises to the chloroplast thylakoid membrane. Functionally, component of the cytochrome b6-f complex, which mediates electron transfer between photosystem II (PSII) and photosystem I (PSI), cyclic electron flow around PSI, and state transitions. PetL is important for photoautotrophic growth as well as for electron transfer efficiency and stability of the cytochrome b6-f complex. This chain is Cytochrome b6-f complex subunit 6, found in Pelargonium hortorum (Common geranium).